Consider the following 226-residue polypeptide: Transmembrane protein 204 (226 aa).

At 1–5 (MTVQR) the chain is on the cytoplasmic side. A helical transmembrane segment spans residues 6-26 (LVAAAVLVALVSLILNNVAAF). Residues 27-103 (TSNWVCQTLE…LQFDMMRACN (77 aa)) are Extracellular-facing. A helical transmembrane segment spans residues 104–124 (LVATAALTAGQLTFLLGLVGL). The Cytoplasmic portion of the chain corresponds to 125–136 (PLLSPDAPCWEE). A helical transmembrane segment spans residues 137–157 (AMAAAFQLASFVLVIGLVTFY). The Extracellular segment spans residues 158-170 (RIGPYTNLSWSCY). Asparagine 164 is a glycosylation site (N-linked (GlcNAc...) asparagine). A helical membrane pass occupies residues 171–191 (LNIGACLLATLAAAMLIWNIL). The Cytoplasmic portion of the chain corresponds to 192–226 (HKREDCMAPRVIVISRSLTARFRRGLDNDYVESPC).

Highly expressed in lung, heart, kidney and placenta. Lower expression in thymus, spleen, liver, testis and ovary. Expressed in endothelial and restricted epithelial cell populations.

It localises to the cell junction. It is found in the adherens junction. The protein localises to the cell membrane. In terms of biological role, can influence paracellular permeability. Appears to be involved in cell-cell interactions through adherens. The sequence is that of Transmembrane protein 204 (TMEM204) from Homo sapiens (Human).